Here is a 404-residue protein sequence, read N- to C-terminus: MSYKIMAINAGSSSLKFQLLEMPQGDMLCQGLIERIGMADAQVTIKTHSQKWQETVPVADHRDAVTLLLEKLLGYQIINSLRDIDGVGHRVAHGGEFFKDSTLVTDETLAQIERLAELAPLHNPVNALGIHVFRQLLPDAPSVAVFDTAFHQTLDEPAYIYPLPWHYYAELGIRRYGFHGTSHKYVSGVLAEKLGVPLSALRVICCHLGNGSSICAIKNGRSVNTSMGFTPQSGVMMGTRSGDIDPSILPWIAQRESKTPQQLNQLLNNESGLLGVSGVSSDYRDVEQAANTGNRQAKLALTLFAERIRATIGSYIMQMGGLDALVFTGGIGENSARARSAVCHNLQFLGLAVDEEKNQRNATFIQTENALVKVAVINTNEELMIAQDVMRIALPATEGLCVPA.

The protein belongs to the acetokinase family. PduW subfamily.

Its subcellular location is the cytoplasm. The enzyme catalyses propanoate + ATP = propanoyl phosphate + ADP. The protein operates within polyol metabolism; 1,2-propanediol degradation. It functions in the pathway organic acid metabolism; propanoate degradation. Its function is as follows. Works with phosphate acetyltransferase (pta) to capture exogenous propionate and regenerate propionyl-CoA during degradation of propionate and 1,2-propanediol (1,2-PD). Ectopic expression partially complements a cobB deletion allowing some growth on propionate. Restores growth to an eutQ deletion on ethanolamine and tetrathionate under anoxic conditions. The protein is Propionate kinase PduW of Salmonella typhimurium (strain LT2 / SGSC1412 / ATCC 700720).